Here is a 129-residue protein sequence, read N- to C-terminus: Follitropin subunit beta (129 aa).

The signal sequence occupies residues 1 to 20 (MKSVQFCFLFCCWRAICCRS). 6 cysteine pairs are disulfide-bonded: C21-C69, C35-C84, C38-C122, C46-C100, C50-C102, and C105-C112. N-linked (GlcNAc...) asparagine glycosylation is found at N25 and N42.

It belongs to the glycoprotein hormones subunit beta family. Heterodimer. The active follitropin is a heterodimer composed of an alpha chain/CGA shared with other hormones and a unique beta chain/FSHB shown here.

It is found in the secreted. Functionally, together with the alpha chain CGA constitutes follitropin, the follicle-stimulating hormone, and provides its biological specificity to the hormone heterodimer. Binds FSHR, a G protein-coupled receptor, on target cells to activate downstream signaling pathways. Follitropin is involved in follicle development and spermatogenesis in reproductive organs. This is Follitropin subunit beta (FSHB) from Bos taurus (Bovine).